Here is a 139-residue protein sequence, read N- to C-terminus: 6,7-dimethyl-8-ribityllumazine synthase (139 aa).

5-amino-6-(D-ribitylamino)uracil is bound by residues Phe13, Val45–Asp47, and Ala69–Ile71. Ala74–Thr75 is a binding site for (2S)-2-hydroxy-3-oxobutyl phosphate. His77 (proton donor) is an active-site residue. Leu102 is a 5-amino-6-(D-ribitylamino)uracil binding site. Arg117 contributes to the (2S)-2-hydroxy-3-oxobutyl phosphate binding site.

The protein belongs to the DMRL synthase family.

The catalysed reaction is (2S)-2-hydroxy-3-oxobutyl phosphate + 5-amino-6-(D-ribitylamino)uracil = 6,7-dimethyl-8-(1-D-ribityl)lumazine + phosphate + 2 H2O + H(+). It participates in cofactor biosynthesis; riboflavin biosynthesis; riboflavin from 2-hydroxy-3-oxobutyl phosphate and 5-amino-6-(D-ribitylamino)uracil: step 1/2. Functionally, catalyzes the formation of 6,7-dimethyl-8-ribityllumazine by condensation of 5-amino-6-(D-ribitylamino)uracil with 3,4-dihydroxy-2-butanone 4-phosphate. This is the penultimate step in the biosynthesis of riboflavin. The chain is 6,7-dimethyl-8-ribityllumazine synthase from Methanothermobacter thermautotrophicus (strain ATCC 29096 / DSM 1053 / JCM 10044 / NBRC 100330 / Delta H) (Methanobacterium thermoautotrophicum).